Reading from the N-terminus, the 717-residue chain is Cleavage stimulation factor subunit 3 (717 aa).

Ser-2 bears the N-acetylserine mark. HAT repeat units follow at residues 45 to 77, 79 to 110, 117 to 152, 163 to 196, 221 to 261, 271 to 303, 319 to 352, 354 to 387, and 458 to 494; these read QPID…AEIK, KNYD…YVRE, SYKE…FLKG, QRIT…YEEG, KEYE…WEKS, LITK…YLEQ, LFSD…YEES, MKYE…FARR, and NEDN…FESN. The tract at residues 684-705 is disordered; sequence VKRPNEDSDEDEEKGAVVPPVH. Ser-691 is subject to Phosphoserine.

As to quaternary structure, homodimer. The CSTF complex is composed of CSTF1 (50 kDa subunit), CSTF2 (64 kDa subunit) and CSTF3 (77 kDa subunit). CSTF3 directly interacts with CSTF1 and CSTF2. Interacts with FIP1L1.

It localises to the nucleus. One of the multiple factors required for polyadenylation and 3'-end cleavage of mammalian pre-mRNAs. This chain is Cleavage stimulation factor subunit 3 (CSTF3), found in Pongo abelii (Sumatran orangutan).